The primary structure comprises 269 residues: UPF0328 protein ECU03_0020 (269 aa).

It belongs to the UPF0328 family.

This chain is UPF0328 protein ECU03_0020, found in Encephalitozoon cuniculi (strain GB-M1) (Microsporidian parasite).